The sequence spans 100 residues: Small ribosomal subunit protein uS14 (100 aa).

This sequence belongs to the universal ribosomal protein uS14 family. Part of the 30S ribosomal subunit. Contacts proteins S3 and S10.

In terms of biological role, binds 16S rRNA, required for the assembly of 30S particles and may also be responsible for determining the conformation of the 16S rRNA at the A site. The protein is Small ribosomal subunit protein uS14 of Prochlorococcus marinus (strain MIT 9215).